Consider the following 284-residue polypeptide: MSVEKAKAYWQLMRMDRPIGTLLLLWPTLWALIIAAEGTPDWHVLLVFVLGVVLMRSAGCVINDFADRKVDGHVKRTQQRPLPSGRVTAKEAIILFLLLGISSFLLVLTMNPLTIQLSFAGIVLAFIYPFMKRYTHLPQLFLGLAFSWAIPMAWAAQANELPWVVWFVFAINALWTIAYDTQYAMVDRDDDVHIGVKSTAILFGRHDKLIIGLLQLLTLVMLVWLGLHYQLGQSFYWSVLAAGALFVYQQHLIRHRQRELCFQAFLNNNYVGMVLALGLFVAFW.

A run of 8 helical transmembrane segments spans residues 18–38 (PIGT…AAEG), 42–62 (WHVL…GCVI), 93–113 (IILF…MNPL), 136–156 (HLPQ…AWAA), 161–181 (LPWV…AYDT), 209–229 (LIIG…GLHY), 233–253 (QSFY…QHLI), and 264–284 (AFLN…VAFW).

Belongs to the UbiA prenyltransferase family. It depends on Mg(2+) as a cofactor.

Its subcellular location is the cell inner membrane. It carries out the reaction all-trans-octaprenyl diphosphate + 4-hydroxybenzoate = 4-hydroxy-3-(all-trans-octaprenyl)benzoate + diphosphate. The protein operates within cofactor biosynthesis; ubiquinone biosynthesis. Functionally, catalyzes the prenylation of para-hydroxybenzoate (PHB) with an all-trans polyprenyl group. Mediates the second step in the final reaction sequence of ubiquinone-8 (UQ-8) biosynthesis, which is the condensation of the polyisoprenoid side chain with PHB, generating the first membrane-bound Q intermediate 3-octaprenyl-4-hydroxybenzoate. This is 4-hydroxybenzoate octaprenyltransferase from Vibrio vulnificus (strain CMCP6).